Consider the following 288-residue polypeptide: CBY1-interacting BAR domain-containing protein 1 (288 aa).

The transit peptide at 1–47 (MLRRSLENRDAQTRQLQDAVTNVEKHFGELCQIFAAYVRKTARLRDK) directs the protein to the mitochondrion. Positions 10–220 (DAQTRQLQDA…KIDEEEDLEV (211 aa)) are BAR-like. Residues 107 to 176 (KMKRDDLKAT…ETIDNFEKQK (70 aa)) are a coiled coil. Positions 266–288 (RKDHQTEDDDEEDEDLDVTEEEN) are disordered. Residues 271 to 288 (TEDDDEEDEDLDVTEEEN) are compositionally biased toward acidic residues.

The protein belongs to the CIBAR family. In terms of assembly, homodimer (via BAR-like domain). Heterodimer with FAM92B (via BAR-like domains). Interacts (via BAR-like domain) with CBY1; this interaction is required for targeting FAM92A to centriole and cilium basal body. Interacts (via BAR-like domain) with CBY3; both proteins form a ninefold symmetric structure at the flagellar base; are recruited to the annulus in a mutually dependent manner and regulate annulus positionning.

It is found in the cytoplasm. The protein resides in the cytoskeleton. Its subcellular location is the microtubule organizing center. It localises to the centrosome. The protein localises to the centriole. It is found in the cilium basal body. The protein resides in the cell projection. Its subcellular location is the cilium. It localises to the nucleus. The protein localises to the mitochondrion inner membrane. It is found in the flagellum. Functionally, plays a critical role in regulating mitochondrial ultrastructure and function by maintaining the integrity of mitochondrial morphology, particularly the organization of cristae. Preferentially binds to negatively charged phospholipids like cardiolipin and phosphatidylinositol 4,5-bisphosphate enhancing its interaction with mitochondrial membranes. Induces membrane curvature and tubulation, which are critical for maintaining mitochondrial ultrastructure and the organization of cristae. Plays a crucial role in ciliogenesis. May play a role in limb development through its role in ciliogenesis. Plays a key role in the correct positioning of the annulus, a septin-based ring structure in the sperm flagellum, serving both as a physical barrier and a membrane diffusion barrier that separates the midpiece (MP) from the principal piece (PP). This positioning is essential for proper sperm motility and function. Interacts with CBY3 to form a complex which localizes to the curved membrane region of the flagellar pocket. By doing so, may provide stability and rigidity to the periannular membrane to prevent membrane deformation. This function is crucial for halting annulus migration at the proximal end of the fibrous sheath-containing PP. This chain is CBY1-interacting BAR domain-containing protein 1, found in Bos taurus (Bovine).